A 214-amino-acid chain; its full sequence is Riboflavin kinase (214 aa).

The segment at 1 to 27 (MRPDRPRDPVTGPDEGPESPYPIRMSG) is disordered. Thr44 and Asn46 together coordinate Mg(2+). Glu101 serves as the catalytic Nucleophile.

The protein belongs to the flavokinase family. It depends on Zn(2+) as a cofactor. Requires Mg(2+) as cofactor.

The enzyme catalyses riboflavin + ATP = FMN + ADP + H(+). Its pathway is cofactor biosynthesis; FMN biosynthesis; FMN from riboflavin (ATP route): step 1/1. Functionally, catalyzes the phosphorylation of riboflavin (vitamin B2) to form flavin mononucleotide (FMN) coenzyme. The chain is Riboflavin kinase (fmn1) from Aspergillus niger (strain ATCC MYA-4892 / CBS 513.88 / FGSC A1513).